Reading from the N-terminus, the 60-residue chain is Homeobox protein EgHBX4 (60 aa).

The homeobox DNA-binding region spans 1–60 (SRRERTIYTPEQLEAMEEVFGVNRYPDVSMREELASRLGINESKIQVWFKNRRAKLRNLE).

The protein belongs to the paired homeobox family. Bicoid subfamily.

The protein resides in the nucleus. This chain is Homeobox protein EgHBX4 (HBX4), found in Echinococcus granulosus (Hydatid tapeworm).